Reading from the N-terminus, the 163-residue chain is UPF0416 protein RBE_0909 (163 aa).

It belongs to the UPF0416 family.

This Rickettsia bellii (strain RML369-C) protein is UPF0416 protein RBE_0909.